Here is a 364-residue protein sequence, read N- to C-terminus: tRNA-specific 2-thiouridylase MnmA 1 (364 aa).

Residues 10-17 and Met-36 each bind ATP; that span reads GMSGGVDS. Cys-106 serves as the catalytic Nucleophile. Cys-106 and Cys-204 form a disulfide bridge. ATP is bound at residue Gly-130. Positions 154–156 are interaction with tRNA; sequence KDQ. Cys-204 functions as the Cysteine persulfide intermediate in the catalytic mechanism. The interaction with tRNA stretch occupies residues 310 to 311; that stretch reads RY.

It belongs to the MnmA/TRMU family.

The protein localises to the cytoplasm. The enzyme catalyses S-sulfanyl-L-cysteinyl-[protein] + uridine(34) in tRNA + AH2 + ATP = 2-thiouridine(34) in tRNA + L-cysteinyl-[protein] + A + AMP + diphosphate + H(+). In terms of biological role, catalyzes the 2-thiolation of uridine at the wobble position (U34) of tRNA, leading to the formation of s(2)U34. The protein is tRNA-specific 2-thiouridylase MnmA 1 of Thermoanaerobacter pseudethanolicus (strain ATCC 33223 / 39E) (Clostridium thermohydrosulfuricum).